The following is a 258-amino-acid chain: Putative ankyrin repeat domain-containing protein 30B-like (258 aa).

A disordered region spans residues 1–21 (MERLSAAPVKGQTGPERPSPF). ANK repeat units follow at residues 71–100 (KKRT…QLDV), 104–133 (ENRT…DPNI), 137–166 (YGNT…DIEV), and 170–199 (AGHT…NANA). A disordered region spans residues 216-258 (KISKNSQNSNPEGTSEGTPDEAAPLAERTPDTAESLVERTPDE). Residues 218-232 (SKNSQNSNPEGTSEG) show a composition bias toward polar residues. Positions 243 to 258 (RTPDTAESLVERTPDE) are enriched in basic and acidic residues.

This is Putative ankyrin repeat domain-containing protein 30B-like (ANKRD30BL) from Homo sapiens (Human).